The following is a 620-amino-acid chain: 1-deoxy-D-xylulose-5-phosphate synthase (620 aa).

Residues His-80 and 121-123 (GHS) each bind thiamine diphosphate. Asp-152 is a binding site for Mg(2+). Residues 153–154 (GA), Asn-181, Tyr-288, and Glu-370 each bind thiamine diphosphate. Mg(2+) is bound at residue Asn-181.

It belongs to the transketolase family. DXPS subfamily. As to quaternary structure, homodimer. Requires Mg(2+) as cofactor. Thiamine diphosphate is required as a cofactor.

The catalysed reaction is D-glyceraldehyde 3-phosphate + pyruvate + H(+) = 1-deoxy-D-xylulose 5-phosphate + CO2. The protein operates within metabolic intermediate biosynthesis; 1-deoxy-D-xylulose 5-phosphate biosynthesis; 1-deoxy-D-xylulose 5-phosphate from D-glyceraldehyde 3-phosphate and pyruvate: step 1/1. Its function is as follows. Catalyzes the acyloin condensation reaction between C atoms 2 and 3 of pyruvate and glyceraldehyde 3-phosphate to yield 1-deoxy-D-xylulose-5-phosphate (DXP). This is 1-deoxy-D-xylulose-5-phosphate synthase from Citrobacter koseri (strain ATCC BAA-895 / CDC 4225-83 / SGSC4696).